Here is a 63-residue protein sequence, read N- to C-terminus: 2-hydroxymuconate tautomerase (63 aa).

Catalysis depends on Pro2, which acts as the Proton acceptor; via imino nitrogen.

Belongs to the 4-oxalocrotonate tautomerase family. In terms of assembly, homohexamer.

It catalyses the reaction (2Z,4E)-2-hydroxyhexa-2,4-dienedioate = (3E)-2-oxohex-3-enedioate. It participates in aromatic compound metabolism; salicylate degradation. Its function is as follows. Catalyzes the ketonization of 2-hydroxymuconate stereoselectively to yield 2-oxo-3-hexenedioate. The polypeptide is 2-hydroxymuconate tautomerase (tdnL) (Pseudomonas putida (Arthrobacter siderocapsulatus)).